The primary structure comprises 376 residues: MKGLEEYVREILEDIRRRGLEALREYSERFDNYSGPFRVSEGEFEEAEELVPEEDKRVIEETMERLWEYHARQFRDVELYIKRGSLYGLIYRPIGRIGIYVPGGKPLPSTLMMVGIPARIAGVREIAVTTPPKDGKVNPYVLYVAKLLGIEEVYKLGGVGAIAAMAYGVGMRRVDKIFGPGNRFVNEAKRQVFGIVGIDSLAGPSEIAVIADESADKDYVLADLLSQLEHGKDSKAWLLTTSRELADYCSREGIEVLLCRNLEECAEKANEIAPEHLEIITENPEELVDLIENAGAIYLGPYTPVPAADYFLGVNHVLPTGGAARFSGVLTVMDFMKPITLARVSREEFLAYRRLGMRLAEIEGMEAHRRSLEVRR.

The NAD(+) site is built by Y100 and N182. The substrate site is built by S205, Q227, and H230. Residues Q227 and H230 each contribute to the Zn(2+) site. Residues E275 and H276 each act as proton acceptor in the active site. H276, D309, E363, and H368 together coordinate substrate. Position 309 (D309) interacts with Zn(2+). Position 368 (H368) interacts with Zn(2+).

Belongs to the histidinol dehydrogenase family. Zn(2+) is required as a cofactor.

It carries out the reaction L-histidinol + 2 NAD(+) + H2O = L-histidine + 2 NADH + 3 H(+). It functions in the pathway amino-acid biosynthesis; L-histidine biosynthesis; L-histidine from 5-phospho-alpha-D-ribose 1-diphosphate: step 9/9. In terms of biological role, catalyzes the sequential NAD-dependent oxidations of L-histidinol to L-histidinaldehyde and then to L-histidine. The chain is Histidinol dehydrogenase from Thermococcus kodakarensis (strain ATCC BAA-918 / JCM 12380 / KOD1) (Pyrococcus kodakaraensis (strain KOD1)).